The primary structure comprises 35 residues: Photosystem II reaction center protein M (35 aa).

At M1 the chain carries N-formylmethionine. The chain crosses the membrane as a helical span at residues G7–Q28.

It belongs to the PsbM family. PSII is composed of 1 copy each of membrane proteins PsbA, PsbB, PsbC, PsbD, PsbE, PsbF, PsbH, PsbI, PsbJ, PsbK, PsbL, PsbM, PsbT, PsbX, PsbY, PsbZ, Psb30/Ycf12, peripheral proteins PsbO, CyanoQ (PsbQ), PsbU, PsbV and a large number of cofactors. It forms dimeric complexes.

The protein resides in the cellular thylakoid membrane. One of the components of the core complex of photosystem II (PSII). PSII is a light-driven water:plastoquinone oxidoreductase that uses light energy to abstract electrons from H(2)O, generating O(2) and a proton gradient subsequently used for ATP formation. It consists of a core antenna complex that captures photons, and an electron transfer chain that converts photonic excitation into a charge separation. This subunit is found at the monomer-monomer interface. Involved in assembly of monomeric PSII from the CP43-less intermediate. The sequence is that of Photosystem II reaction center protein M from Synechocystis sp. (strain ATCC 27184 / PCC 6803 / Kazusa).